Reading from the N-terminus, the 380-residue chain is Crotonobetainyl-CoA reductase (380 aa).

It belongs to the acyl-CoA dehydrogenase family. In terms of assembly, homotetramer. FAD is required as a cofactor.

It localises to the cytoplasm. It carries out the reaction 4-(trimethylamino)butanoyl-CoA + oxidized [electron-transfer flavoprotein] + H(+) = crotonobetainyl-CoA + reduced [electron-transfer flavoprotein]. It participates in amine and polyamine metabolism; carnitine metabolism. Functionally, catalyzes the reduction of crotonobetainyl-CoA to gamma-butyrobetainyl-CoA. In Salmonella agona (strain SL483), this protein is Crotonobetainyl-CoA reductase.